The primary structure comprises 258 residues: DNA repair protein RecO (258 aa).

It belongs to the RecO family.

In terms of biological role, involved in DNA repair and RecF pathway recombination. The polypeptide is DNA repair protein RecO (Syntrophotalea carbinolica (strain DSM 2380 / NBRC 103641 / GraBd1) (Pelobacter carbinolicus)).